The primary structure comprises 295 residues: Protein transport protein SSO2 (295 aa).

Residues 1 to 18 are compositionally biased toward low complexity; sequence MSNPYQNSQNGYQQNNSY. Positions 1–31 are disordered; that stretch reads MSNPYQNSQNGYQQNNSYELNNYPNKQYSSS. Topologically, residues 1–270 are cytoplasmic; sequence MSNPYQNSQN…SAKSARKKKL (270 aa). The segment covering 19-31 has biased composition (polar residues); sequence ELNNYPNKQYSSS. Positions 33 to 110 form a coiled coil; sequence EDDFVQFMNE…NRIKNVQTQA (78 aa). The 63-residue stretch at 196-258 folds into the t-SNARE coiled-coil homology domain; that stretch reads LNEVQVRHRE…EQGVGHTNKA (63 aa). The chain crosses the membrane as a helical; Anchor for type IV membrane protein span at residues 271–291; it reads WCFFICLLIVIILAVILGAYF. Residues 292-295 are Extracellular-facing; the sequence is GTRK.

The protein belongs to the syntaxin family.

The protein localises to the membrane. In terms of biological role, late secretory t-SNARE protein required for secretion and proper cytokinesis. Plays an important role in the secretion of virulence-associated extracellular enzymes and vesicle-mediated polarized hyphal growth. This Candida albicans (strain SC5314 / ATCC MYA-2876) (Yeast) protein is Protein transport protein SSO2 (SSO2).